We begin with the raw amino-acid sequence, 727 residues long: Phosphoribosylformylglycinamidine synthase subunit PurL (727 aa).

Residue histidine 47 is part of the active site. Tyrosine 50 and lysine 82 together coordinate ATP. Position 84 (glutamate 84) interacts with Mg(2+). Residues serine 85–histidine 88 and arginine 107 each bind substrate. Histidine 86 serves as the catalytic Proton acceptor. Aspartate 108 lines the Mg(2+) pocket. Glutamine 229 lines the substrate pocket. Aspartate 257 is a Mg(2+) binding site. Substrate is bound at residue glutamate 301 to glutamine 303. Residues aspartate 486 and glycine 523 each contribute to the ATP site. Residue asparagine 524 participates in Mg(2+) binding. Residue serine 526 coordinates substrate.

It belongs to the FGAMS family. Monomer. Part of the FGAM synthase complex composed of 1 PurL, 1 PurQ and 2 PurS subunits.

The protein localises to the cytoplasm. The enzyme catalyses N(2)-formyl-N(1)-(5-phospho-beta-D-ribosyl)glycinamide + L-glutamine + ATP + H2O = 2-formamido-N(1)-(5-O-phospho-beta-D-ribosyl)acetamidine + L-glutamate + ADP + phosphate + H(+). It participates in purine metabolism; IMP biosynthesis via de novo pathway; 5-amino-1-(5-phospho-D-ribosyl)imidazole from N(2)-formyl-N(1)-(5-phospho-D-ribosyl)glycinamide: step 1/2. Its function is as follows. Part of the phosphoribosylformylglycinamidine synthase complex involved in the purines biosynthetic pathway. Catalyzes the ATP-dependent conversion of formylglycinamide ribonucleotide (FGAR) and glutamine to yield formylglycinamidine ribonucleotide (FGAM) and glutamate. The FGAM synthase complex is composed of three subunits. PurQ produces an ammonia molecule by converting glutamine to glutamate. PurL transfers the ammonia molecule to FGAR to form FGAM in an ATP-dependent manner. PurS interacts with PurQ and PurL and is thought to assist in the transfer of the ammonia molecule from PurQ to PurL. This Petrotoga mobilis (strain DSM 10674 / SJ95) protein is Phosphoribosylformylglycinamidine synthase subunit PurL.